Here is a 23-residue protein sequence, read N- to C-terminus: DAAQVPDFATAVQNLXHTLSEAA.

This sequence belongs to the insect apolipophorin-3 family. In terms of assembly, equilibrium between a soluble monomer and a bound lipoprotein form. Apolipophorin-3 associates with lipophorin during lipid loading until each particle contains 9 or 14 molecules of apolipophorin-3. In terms of tissue distribution, hemolymph.

The protein localises to the secreted. In terms of biological role, assists in the loading of diacylglycerol, generated from triacylglycerol stores in the fat body through the action of adipokinetic hormone, into lipophorin, the hemolymph lipoprotein. It increases the lipid carrying capacity of lipophorin by covering the expanding hydrophobic surface resulting from diacylglycerol uptake. It thus plays a critical role in the transport of lipids during flight in several species of insects. This is Apolipophorin-3 from Melanoplus sanguinipes (Migratory grasshopper).